We begin with the raw amino-acid sequence, 76 residues long: Gas vesicle protein A1 (76 aa).

2 binds to GvpF1 regions span residues 1 to 22 (MAQP…KGVV) and 2 to 43 (AQPD…EARV). The tract at residues 9-19 (LAEVLDRVLDK) is alpha helix 1. The beta-strand 1 stretch occupies residues 23–31 (VDVWARVSL). The interval 32 to 34 (VGI) is beta turn. The beta-strand 2 stretch occupies residues 35-43 (EILTVEARV). Residues 48–67 (VDTFLHYAEEIAKIEQAELT) form an alpha helix 2 region.

Belongs to the gas vesicle GvpA family. Major component of the gas vesicle shell which is 2 nm thick and consists of a single layer of the protein. It forms 4.6 nm-wide ribs nearly perpendicular to the long axis of the vesicle. Modeled as antiparallel homodimers. The ribs form a low-pitch helix rather than a stack of hoops. Interacts with GvpF1 via its N-terminus (residues 1-43) in early growth stages, none of the other GvpG1 to GvpM1 proteins were seen to directly bind GvpA1 in H.volcanii experiments. Might interact with GvpJ1. Might interact with GvpG1, GvpH1, GvpJ1, GvpM1, GvpN1 and GvpO1.

The protein resides in the gas vesicle shell. Gas vesicles are hollow, gas filled proteinaceous nanostructures found in several microbial planktonic microorganisms. They allow positioning of halobacteria at the optimal depth for growth in the poorly aerated shallow brine pools of their habitat. GvpA forms the protein shell. The critical collapse pressure (CCP) of p-vac gas vesicles is 0.66 MPa; mutating residues in p-gvpA to those found in c-gvpA increases the CCP. These residues partially and independently control the width and strength of gas vesicles. In stationary phase gas vesicles, about 30 times more GvpA1 is found than GvpA2. Its function is as follows. Expression of a 9.5 kb p-vac DNA fragment containing 2 divergently transcribed regions (gvpD-gvpE-gvpF-gvpG-gvpH-gvpI-gvpJ-gvpK-gvpL-gvpM and gvpA-gvpC-gvpN-gvpO) allows H.volcanii to produce gas vesicles. All site-directed mutagenesis is tested in H.volcanii. A minimal gas vesicle can be made in H.volcanii by gvpA1-gvpO1 plus gvpF1-gvpG1-gvpJ1-gvpK1-gvpL1-gvpM1; lack of enough GvpJ1 prevents their formation. A similar region restores gas vesicle production in H.halobium without the p-vac locus, but it still has the c-vac locus. The sequence is that of Gas vesicle protein A1 from Halobacterium salinarum (strain ATCC 700922 / JCM 11081 / NRC-1) (Halobacterium halobium).